Consider the following 34-residue polypeptide: Photosystem II reaction center protein M (34 aa).

A helical transmembrane segment spans residues 5–25 (ILAFIATALFILIPTSFLLII).

Belongs to the PsbM family. As to quaternary structure, PSII is composed of 1 copy each of membrane proteins PsbA, PsbB, PsbC, PsbD, PsbE, PsbF, PsbH, PsbI, PsbJ, PsbK, PsbL, PsbM, PsbT, PsbX, PsbY, PsbZ, Psb30/Ycf12, at least 3 peripheral proteins of the oxygen-evolving complex and a large number of cofactors. It forms dimeric complexes. Detected in both etioplasts and green leaves; PSII is only assembled in green leaves.

The protein resides in the plastid. It localises to the chloroplast thylakoid membrane. One of the components of the core complex of photosystem II (PSII). PSII is a light-driven water:plastoquinone oxidoreductase that uses light energy to abstract electrons from H(2)O, generating O(2) and a proton gradient subsequently used for ATP formation. It consists of a core antenna complex that captures photons, and an electron transfer chain that converts photonic excitation into a charge separation. This subunit is found at the monomer-monomer interface. The protein is Photosystem II reaction center protein M of Hordeum vulgare (Barley).